The sequence spans 487 residues: Serine/threonine-protein phosphatase 2A activator 1 (487 aa).

2 disordered regions span residues 1–28 and 426–487; these read MPMI…SSST and GGIQ…PKPE.

This sequence belongs to the PTPA-type PPIase family.

It localises to the cytoplasm. The protein resides in the nucleus. The enzyme catalyses [protein]-peptidylproline (omega=180) = [protein]-peptidylproline (omega=0). Functionally, PPIases accelerate the folding of proteins. It catalyzes the cis-trans isomerization of proline imidic peptide bonds in oligopeptides. Acts as a regulatory subunit for PP2A-like phosphatases modulating their activity or substrate specificity, probably by inducing a conformational change in the catalytic subunit, a direct target of the PPIase. Can reactivate inactive phosphatase PP2A-phosphatase methylesterase complexes (PP2Ai) in presence of ATP and Mg(2+) by dissociating the inactive form from the complex. The protein is Serine/threonine-protein phosphatase 2A activator 1 (RRD1) of Mycosarcoma maydis (Corn smut fungus).